We begin with the raw amino-acid sequence, 133 residues long: ATP synthase epsilon chain (133 aa).

The protein belongs to the ATPase epsilon chain family. In terms of assembly, F-type ATPases have 2 components, CF(1) - the catalytic core - and CF(0) - the membrane proton channel. CF(1) has five subunits: alpha(3), beta(3), gamma(1), delta(1), epsilon(1). CF(0) has three main subunits: a, b and c.

Its subcellular location is the cell membrane. Produces ATP from ADP in the presence of a proton gradient across the membrane. In Geobacillus thermodenitrificans (strain NG80-2), this protein is ATP synthase epsilon chain.